We begin with the raw amino-acid sequence, 333 residues long: MTNTAKILNFGRGNFAGQERNVADLDDGYARLSNMLLEAYSGADLTKRQFKVLLAILRKTYGWNKPMDRITDSQLSEITKLPVKRCNEAKLELVRMNIIKQQGGMFGPNKNISEWCIPQNEGKSPKTRDKTSLKLGDCYPSKQGDTKDTITKEKRKDYSSENSGESSDQPENDLSVVKPDAAIQSGSKWGTAEDLTAAEWMFDMVKTIAPSARKPNFAGWANDIRLMRERDGRNHRDMCVLFRWACQDNFWSGNVLSPAKLRDKWTQLEINRNKQQAGVTASKPKLDLTNTDWIYGVDLKTSPHRWLTLTVSRCVGSPTTCRNSTTKSRRYSR.

The segment at 117 to 181 (IPQNEGKSPK…NDLSVVKPDA (65 aa)) is disordered. Basic and acidic residues-rich tracts occupy residues 123 to 132 (KSPKTRDKTS) and 144 to 159 (GDTK…KDYS). The span at 160–169 (SENSGESSDQ) shows a compositional bias: polar residues.

Belongs to the phage O protein family.

Its function is as follows. Necessary for the bidirectional replication of DNA. It interacts with the ori (origin of replication) region of the genome during the initiation of replication. The polypeptide is Replication protein O (O) (Escherichia phage lambda (Bacteriophage lambda)).